A 109-amino-acid chain; its full sequence is uncharacterized protein (109 aa).

Residues Ser82 to Thr102 form a helical membrane-spanning segment.

It localises to the membrane. This is an uncharacterized protein from Saccharomyces cerevisiae (strain ATCC 204508 / S288c) (Baker's yeast).